We begin with the raw amino-acid sequence, 506 residues long: MVSSTTPSSGEYLLEMSGINKSFPGVKALDNVNLKVRPHSIHALMGENGAGKSTLLKCLFGIYQKDSGTILFQGKEIDFHSAKEALENGISMVHQELNLVLQRSVMDNMWLGRYPTKGMFVDQDKMYRETKAIFDELDIDIDPRARVGTLSVSQMQMIEIAKAFSYNAKIVIMDEPTSSLTEKEVNHLFTIIRKLKERGCGIVYISHKMEEIFQLCDEVTVLRDGQWIATEPLAGLTMDKIIAMMVGRSLNQRFPDKENKPGEVILEVRNLTSLRQPSIRDVSFDLHKGEILGIAGLVGAKRTDIVETLFGIREKSAGTITLHGKQINNHNANEAINHGFALVTEERRSTGIYAYLDIGFNSLISNIRNYKNKVGLLDNSRMKSDTQWVIDSMRVKTPGHRTQIGSLSGGNQQKVIIGRWLLTQPEILMLDEPTRGIDVGAKFEIYQLIAELAKKGKGIIIISSEMPELLGITDRILVMSNGLVSGIVDTKTTTQNEILRLASLHL.

ABC transporter domains follow at residues 14–249 (LEMS…VGRS) and 264–506 (VILE…SLHL). ATP is bound at residue 46–53 (GENGAGKS).

It belongs to the ABC transporter superfamily. Galactose/methyl galactoside importer (TC 3.A.1.2.3) family. The complex is composed of one ATP-binding protein (MglA), two transmembrane proteins (MglC) and a solute-binding protein (MglB).

It localises to the cell inner membrane. The enzyme catalyses D-galactose(out) + ATP + H2O = D-galactose(in) + ADP + phosphate + H(+). The catalysed reaction is methyl beta-D-galactoside(out) + ATP + H2O = methyl beta-D-galactoside(in) + ADP + phosphate + H(+). Its function is as follows. Part of the ABC transporter complex MglABC involved in galactose/methyl galactoside import. Responsible for energy coupling to the transport system. This Escherichia coli (strain K12) protein is Galactose/methyl galactoside import ATP-binding protein MglA.